The chain runs to 92 residues: MKDYQYPLDLDWTTEEMVIVTNMWTAVEQANETGLPVDKFLTTYQQFKTVVKSIGEEKRLGREFENASGYSLYRTLQQAKKQGSGKLKLGDD.

It belongs to the UPF0223 family.

This is UPF0223 protein EF_2462 from Enterococcus faecalis (strain ATCC 700802 / V583).